The primary structure comprises 260 residues: Thiazole synthase (260 aa).

K102 serves as the catalytic Schiff-base intermediate with DXP. 1-deoxy-D-xylulose 5-phosphate contacts are provided by residues G163, 189 to 190, and 211 to 212; these read AG and NT.

The protein belongs to the ThiG family. In terms of assembly, homotetramer. Forms heterodimers with either ThiH or ThiS.

The protein localises to the cytoplasm. It carries out the reaction [ThiS sulfur-carrier protein]-C-terminal-Gly-aminoethanethioate + 2-iminoacetate + 1-deoxy-D-xylulose 5-phosphate = [ThiS sulfur-carrier protein]-C-terminal Gly-Gly + 2-[(2R,5Z)-2-carboxy-4-methylthiazol-5(2H)-ylidene]ethyl phosphate + 2 H2O + H(+). The protein operates within cofactor biosynthesis; thiamine diphosphate biosynthesis. In terms of biological role, catalyzes the rearrangement of 1-deoxy-D-xylulose 5-phosphate (DXP) to produce the thiazole phosphate moiety of thiamine. Sulfur is provided by the thiocarboxylate moiety of the carrier protein ThiS. In vitro, sulfur can be provided by H(2)S. This chain is Thiazole synthase, found in Citrifermentans bemidjiense (strain ATCC BAA-1014 / DSM 16622 / JCM 12645 / Bem) (Geobacter bemidjiensis).